The sequence spans 270 residues: tRNA (guanine-N(1)-)-methyltransferase (270 aa).

Residues G113 and 133 to 138 (IGDYVL) contribute to the S-adenosyl-L-methionine site. Positions 251–270 (APTEGTGLIHHRDVEGPGEG) are disordered. Residues 260–270 (HHRDVEGPGEG) are compositionally biased toward basic and acidic residues.

It belongs to the RNA methyltransferase TrmD family. Homodimer.

It localises to the cytoplasm. It catalyses the reaction guanosine(37) in tRNA + S-adenosyl-L-methionine = N(1)-methylguanosine(37) in tRNA + S-adenosyl-L-homocysteine + H(+). Functionally, specifically methylates guanosine-37 in various tRNAs. This is tRNA (guanine-N(1)-)-methyltransferase from Frankia casuarinae (strain DSM 45818 / CECT 9043 / HFP020203 / CcI3).